A 145-amino-acid polypeptide reads, in one-letter code: Ribosomal RNA large subunit methyltransferase H (145 aa).

Residues leucine 64, glycine 93, and leucine 112–phenylalanine 117 contribute to the S-adenosyl-L-methionine site.

This sequence belongs to the RNA methyltransferase RlmH family. Homodimer.

It localises to the cytoplasm. The enzyme catalyses pseudouridine(1915) in 23S rRNA + S-adenosyl-L-methionine = N(3)-methylpseudouridine(1915) in 23S rRNA + S-adenosyl-L-homocysteine + H(+). Its function is as follows. Specifically methylates the pseudouridine at position 1915 (m3Psi1915) in 23S rRNA. This chain is Ribosomal RNA large subunit methyltransferase H, found in Prochlorococcus marinus (strain SARG / CCMP1375 / SS120).